An 865-amino-acid chain; its full sequence is MASQYPGHQLDDIPSTNVYRPPPRHEDDEAEHALLHQNSAYQSQYDDPHSRPLTPGQESVYTLNESYVGGDPSKVPVTSYNPQYTQPYGQGYGMNNSRPGFPTPGPPDPIDRTDSTEAWRERQAPGFGTIKRYATRKVKLVQGSVLSIDYPVPSAIQNAIQAKYRNDLEGGSEEFTHMRYTAATCDPDDFTLKNGYNLRPAMYNRHTELLIAITYYNEDKVLTARTLHGVMQNIRDIVNLKKSEFWNKGGPAWQKIVVCLVFDGIDPCDKNTLDVLATIGVYQDGVMKKDVDGKETVAHIFEYTTQLSVTANQQLIRPNDNDATSLPPAQMIFCLKQKNSKKINSHRWLFNAFGRILNPEVCILLDAGTKPGSKSLMALWQAFYNDKDLGGACGEIHAMLGPGGVFGRKLLNPLVAAQNFEYKISNILDKPLESSFGYVSVLPGAFSAYRFRAIMGRPLEQYFHGDHTLSKRLGKKGIEGMNIFKKNMFLAEDRILCFELVAKAGSKWHLSYVKASKAETDVPEGAPEFIGQRRRWLNGSFAASIYSLMHFSRMYKSGHNLIRMFFLHIQMIYNIVSVLLSWFSLASFWLTTKVLMDLVGQPSTSNDNSAFPFGNTATPIINTILQYLYLAFLLLQFILALGNRPKGSKVAYIISFCLFGLIQLYVIVLSMYLVVRAFTTKNGTDIVTNEGANEFVKSFFASTGPGIVIIALAATFGLYFVASFLYMDPWHMFTSFAQYLLLMPSFINILMIYAFSNWHDVSWGTKGSDKADVLPSAQTKKDEKSKTAVVEEVDKPQADIDSQFEATVRRALAPYKPPEEKEEKTLEDSYKNFRTRLVATWIFSNALLAVAITSDSLDRFGFTVR.

The tract at residues 1 to 59 is disordered; the sequence is MASQYPGHQLDDIPSTNVYRPPPRHEDDEAEHALLHQNSAYQSQYDDPHSRPLTPGQES. A compositionally biased stretch (basic and acidic residues) spans 23 to 34; sequence PRHEDDEAEHAL. A compositionally biased stretch (polar residues) spans 36–45; that stretch reads HQNSAYQSQY. N-linked (GlcNAc...) asparagine glycosylation is found at Asn-64, Asn-95, and Asn-538. 3 consecutive transmembrane segments (helical) span residues 565–585, 620–640, and 650–670; these read FFLH…WFSL, IINT…FILA, and VAYI…IVLS. N-linked (GlcNAc...) asparagine glycosylation is present at Asn-682. 3 helical membrane passes run 707 to 727, 735 to 755, and 837 to 857; these read IVII…FLYM, SFAQ…IYAF, and LVAT…SDSL.

The protein belongs to the chitin synthase family. Class III subfamily.

The protein resides in the cell membrane. The catalysed reaction is [(1-&gt;4)-N-acetyl-beta-D-glucosaminyl](n) + UDP-N-acetyl-alpha-D-glucosamine = [(1-&gt;4)-N-acetyl-beta-D-glucosaminyl](n+1) + UDP + H(+). In terms of biological role, polymerizes chitin, a structural polymer of the cell wall and septum, by transferring the sugar moiety of UDP-GlcNAc to the non-reducing end of the growing chitin polymer. Is not only stable at different pH, but is also able to tolerate a broad temperature range. With CHS2, plays an important role in virulence. This is Chitin synthase 3 from Exophiala dermatitidis (strain ATCC 34100 / CBS 525.76 / NIH/UT8656) (Black yeast).